Consider the following 150-residue polypeptide: Transmembrane protein PMIS2 (150 aa).

Over residues 1 to 12 the composition is skewed to low complexity; it reads MALKPPSATQPA. Positions 1 to 61 are disordered; sequence MALKPPSATQ…EPQEPTQTPE (61 aa). Over residues 13–22 the composition is skewed to pro residues; sequence PNAPATPDAP. Positions 23 to 61 are enriched in low complexity; that stretch reads PTTGDPGASAAPGSPTTTGGPGAPAEVPQEPQEPTQTPE. Helical transmembrane passes span 71 to 91 and 130 to 150; these read LCLT…ALYF and GWFG…LVLY.

The protein belongs to the CD225/Dispanin family.

Its subcellular location is the membrane. Its function is as follows. May play a role in spermatozoa mobility. This Homo sapiens (Human) protein is Transmembrane protein PMIS2.